A 497-amino-acid chain; its full sequence is Di-/tripeptide transporter (497 aa).

Residues 1-36 (MQNLNKTEKTFFGQPRGLLTLFQTEFWERFSYYGMR) lie on the Cytoplasmic side of the membrane. The chain crosses the membrane as a helical span at residues 37-55 (AILVYYLYALTTADNAGLG). The Extracellular portion of the chain corresponds to 56–64 (LPKAQAMAI). A helical transmembrane segment spans residues 65 to 83 (VSIYGALVYLSTIVGGWVA). The Cytoplasmic portion of the chain corresponds to 84–92 (DRLLGASRT). The helical transmembrane segment at 93 to 111 (IFLGGILITLGHIALATPF) threads the bilayer. Over 112–115 (GLSS) the chain is Extracellular. A helical membrane pass occupies residues 116-134 (LFVALFLIILGTGMLKPNI). Residues 135–154 (SNMVGHLYSKDDSRRDTGFN) lie on the Cytoplasmic side of the membrane. A helical membrane pass occupies residues 155–173 (IFVVGINMGSLIAPLIVGT). Over 174–181 (VGQGVNYH) the chain is Extracellular. A helical membrane pass occupies residues 182 to 200 (LGFSLAAIGMIFALFAYWY). Residues 201-224 (GRLRHFPEIGREPSNPMDSKARRN) are Cytoplasmic-facing. A helical membrane pass occupies residues 225-243 (FLITLTIVVIVAIIGFFLL). Residues 244-254 (YQASPANFINN) are Extracellular-facing. Residues 255–273 (FINVLSIIGIVVPIIYFVM) form a helical membrane-spanning segment. Over 274-293 (MFTSKKVESDERRKLTAYIP) the chain is Cytoplasmic. A helical transmembrane segment spans residues 294–312 (LFLSAIVFWAIEEQSSTII). Over 313–335 (AVWGESRSNLDPTWFGITFHIDP) the chain is Extracellular. The helical transmembrane segment at 336–354 (SWYQLLNPLFIVLLSPIFV) threads the bilayer. The Cytoplasmic portion of the chain corresponds to 355 to 372 (RLWNKLGERQPSTIVKFG). Residues 373–391 (LGLMLTGISYLIMTLPGLL) traverse the membrane as a helical segment. The Extracellular portion of the chain corresponds to 392 to 425 (NGTSGRASALWLVLMFAVQMAGELLVSPVGLSVS). Residues 426 to 444 (TKLAPVAFQSQMMAMWFLA) form a helical membrane-spanning segment. The Cytoplasmic segment spans residues 445–497 (DSTSQAINAQITPLFKAATEVHFFAITGIIGIIVGIILLIVKKPILKLMGDVR).

The protein belongs to the major facilitator superfamily. Proton-dependent oligopeptide transporter (POT/PTR) (TC 2.A.17) family.

Its subcellular location is the cell membrane. Proton-dependent uptake of di- or tri-peptides. In Lactococcus lactis subsp. lactis (strain IL1403) (Streptococcus lactis), this protein is Di-/tripeptide transporter (dtpT).